A 98-amino-acid chain; its full sequence is Co-chaperonin GroES 1 (98 aa).

The protein belongs to the GroES chaperonin family. In terms of assembly, heptamer of 7 subunits arranged in a ring. Interacts with the chaperonin GroEL.

The protein resides in the cytoplasm. In terms of biological role, together with the chaperonin GroEL, plays an essential role in assisting protein folding. The GroEL-GroES system forms a nano-cage that allows encapsulation of the non-native substrate proteins and provides a physical environment optimized to promote and accelerate protein folding. GroES binds to the apical surface of the GroEL ring, thereby capping the opening of the GroEL channel. In Rhizobium meliloti (strain 1021) (Ensifer meliloti), this protein is Co-chaperonin GroES 1.